Consider the following 183-residue polypeptide: Peptide deformylase (183 aa).

The Fe cation site is built by Cys-110 and His-153. Glu-154 is an active-site residue. His-157 contacts Fe cation.

This sequence belongs to the polypeptide deformylase family. Fe(2+) serves as cofactor.

It carries out the reaction N-terminal N-formyl-L-methionyl-[peptide] + H2O = N-terminal L-methionyl-[peptide] + formate. Functionally, removes the formyl group from the N-terminal Met of newly synthesized proteins. Requires at least a dipeptide for an efficient rate of reaction. N-terminal L-methionine is a prerequisite for activity but the enzyme has broad specificity at other positions. The protein is Peptide deformylase of Listeria monocytogenes serotype 4a (strain HCC23).